The primary structure comprises 287 residues: Protoheme IX farnesyltransferase (287 aa).

Transmembrane regions (helical) follow at residues 19–39, 100–120, 134–154, 162–182, 212–232, 233–253, and 267–287; these read LMVA…VTIT, MVLC…IVAV, FALL…WLAV, MLVV…WLHA, VWFH…LLEW, VGMR…AMLA, and VLCA…VSLF.

It belongs to the UbiA prenyltransferase family. Protoheme IX farnesyltransferase subfamily.

The protein localises to the cell inner membrane. It carries out the reaction heme b + (2E,6E)-farnesyl diphosphate + H2O = Fe(II)-heme o + diphosphate. Its pathway is porphyrin-containing compound metabolism; heme O biosynthesis; heme O from protoheme: step 1/1. Functionally, converts heme B (protoheme IX) to heme O by substitution of the vinyl group on carbon 2 of heme B porphyrin ring with a hydroxyethyl farnesyl side group. The chain is Protoheme IX farnesyltransferase from Nitratidesulfovibrio vulgaris (strain ATCC 29579 / DSM 644 / CCUG 34227 / NCIMB 8303 / VKM B-1760 / Hildenborough) (Desulfovibrio vulgaris).